The sequence spans 496 residues: RNA-binding motif protein, Y chromosome, family 1 member B (496 aa).

Residues 8-85 (GKLFIGGLNR…KAIKVEQAKK (78 aa)) enclose the RRM domain. 2 disordered regions span residues 67–349 (DMNG…HRDY) and 452–496 (KDQR…SSRY). Composition is skewed to low complexity over residues 97 to 114 (PASS…SARG) and 149 to 159 (PVKRGPSSRSG). Positions 175–184 (NSWMGSQGPM) are enriched in polar residues. Composition is skewed to basic and acidic residues over residues 204–214 (RNDRMSTRHDG), 242–253 (DNGHSNRDEHSS), 276–289 (AYRD…DESY), 313–326 (GYRD…HESY), 335–349 (SSRE…HRDY), and 484–496 (GESR…SSRY).

Interacts with splicing factor proteins SFRS3/SRP20, TRA2B/SFRS10, KHDRBS1/SAM68 and KHDRBS3. Testis-specific.

The protein resides in the nucleus. Functionally, RNA-binding protein which may be involved in spermatogenesis. Required for sperm development, possibly by participating in pre-mRNA splicing in the testis. This chain is RNA-binding motif protein, Y chromosome, family 1 member B (RBMY1B), found in Homo sapiens (Human).